The sequence spans 189 residues: Molybdenum cofactor guanylyltransferase (189 aa).

GTP-binding positions include 10–12 (LAG), Lys-23, Asn-51, Asp-69, and Asp-99. A Mg(2+)-binding site is contributed by Asp-99.

It belongs to the MobA family. As to quaternary structure, monomer. It depends on Mg(2+) as a cofactor.

It is found in the cytoplasm. The catalysed reaction is Mo-molybdopterin + GTP + H(+) = Mo-molybdopterin guanine dinucleotide + diphosphate. Transfers a GMP moiety from GTP to Mo-molybdopterin (Mo-MPT) cofactor (Moco or molybdenum cofactor) to form Mo-molybdopterin guanine dinucleotide (Mo-MGD) cofactor. This is Molybdenum cofactor guanylyltransferase from Pasteurella multocida (strain Pm70).